A 319-amino-acid chain; its full sequence is Acetyl-coenzyme A carboxylase carboxyl transferase subunit alpha (319 aa).

One can recognise a CoA carboxyltransferase C-terminal domain in the interval 35-296 (DLDKELEQLE…KATLLRQLAD (262 aa)).

It belongs to the AccA family. Acetyl-CoA carboxylase is a heterohexamer composed of biotin carboxyl carrier protein (AccB), biotin carboxylase (AccC) and two subunits each of ACCase subunit alpha (AccA) and ACCase subunit beta (AccD).

Its subcellular location is the cytoplasm. The catalysed reaction is N(6)-carboxybiotinyl-L-lysyl-[protein] + acetyl-CoA = N(6)-biotinyl-L-lysyl-[protein] + malonyl-CoA. Its pathway is lipid metabolism; malonyl-CoA biosynthesis; malonyl-CoA from acetyl-CoA: step 1/1. Component of the acetyl coenzyme A carboxylase (ACC) complex. First, biotin carboxylase catalyzes the carboxylation of biotin on its carrier protein (BCCP) and then the CO(2) group is transferred by the carboxyltransferase to acetyl-CoA to form malonyl-CoA. In Vibrio cholerae serotype O1 (strain ATCC 39541 / Classical Ogawa 395 / O395), this protein is Acetyl-coenzyme A carboxylase carboxyl transferase subunit alpha.